The primary structure comprises 555 residues: Transmembrane protein 87A (555 aa).

Positions 1–21 (MAAAAWLQVLPVILLLLGAHP) are cleaved as a signal peptide. The Lumenal segment spans residues 22 to 225 (SPLSFFSAGP…YEYLTLEDYP (204 aa)). Disulfide bonds link C74/C128 and C89/C431. N-linked (GlcNAc...) asparagine glycans are attached at residues N79, N127, N157, and N160. Residues 226 to 246 (LMIFFMVMCIVYVLFGVLWLA) form a helical membrane-spanning segment. Residues 247–257 (WSACYWRDLLR) lie on the Cytoplasmic side of the membrane. The chain crosses the membrane as a helical span at residues 258-278 (IQFWIGAVIFLGMLEKAVFYA). At 279-305 (EFQNIRYKGESVQGALILAELLSAVKR) the chain is on the lumenal side. A helical membrane pass occupies residues 306 to 322 (SLARTLVIIVSLGYGIV). Residues 323 to 325 (KPR) lie on the Cytoplasmic side of the membrane. A helical transmembrane segment spans residues 326 to 346 (LGVTLHKVVVAGALYLLFSGM). Residues 347-361 (EGVLRVTGAQTDLAS) lie on the Lumenal side of the membrane. A helical membrane pass occupies residues 362–382 (LAFIPLAFLDTALCWWIFISL). Topologically, residues 383 to 403 (TQTMKLLKLRRNIVKLSLYRH) are cytoplasmic. Residues 404–424 (FTNTLILAVAASIVFIIWTTM) form a helical membrane-spanning segment. Residues 425–437 (KFRIVTCQSDWRE) lie on the Lumenal side of the membrane. A helical membrane pass occupies residues 438 to 458 (LWVDDAIWRLLFSMILFVIMV). Over 459–555 (LWRPSANNQR…ITHFERSKME (97 aa)) the chain is Cytoplasmic. The interval 473–516 (PLSEEEEEDEQKEPMLKESFEGMKMRSTKQEPNGNSKVNKAQED) is disordered. Residues 484-496 (KEPMLKESFEGMK) show a composition bias toward basic and acidic residues. Residues 502–511 (QEPNGNSKVN) show a composition bias toward polar residues. At S540 the chain carries Phosphoserine.

The protein belongs to the LU7TM family. TMEM87 subfamily. In terms of assembly, may interact with STOML3; STOML3 potentiates the mechanosensitive ion channel activity associated with TMEM87A.

It localises to the cell membrane. It is found in the golgi apparatus membrane. Its subcellular location is the cell projection. The protein resides in the ruffle. Functionally, potential monoatomic ion channel gated by mechanical force, implicated in normal touch sensitivity through the generation of mechanically activated currents. However, a direct channel activity is debated and an alternative could be that it functions as a chaperone for an unidentified mechanosensitive ion channel. Could also be involved in cell mechanosensitivity regulating cell adhesion and migration. May also be involved in retrograde transport from endosomes to the trans-Golgi network (TGN). The chain is Transmembrane protein 87A from Homo sapiens (Human).